The chain runs to 80 residues: Cell division activator CedA (80 aa).

It belongs to the CedA family.

Activates the cell division inhibited by chromosomal DNA over-replication. The sequence is that of Cell division activator CedA from Salmonella choleraesuis (strain SC-B67).